The sequence spans 207 residues: Urease accessory protein UreG (207 aa).

Position 12-19 (12-19) interacts with GTP; it reads GPVGAGKT.

The protein belongs to the SIMIBI class G3E GTPase family. UreG subfamily. Homodimer. UreD, UreF and UreG form a complex that acts as a GTP-hydrolysis-dependent molecular chaperone, activating the urease apoprotein by helping to assemble the nickel containing metallocenter of UreC. The UreE protein probably delivers the nickel.

The protein localises to the cytoplasm. Facilitates the functional incorporation of the urease nickel metallocenter. This process requires GTP hydrolysis, probably effectuated by UreG. This chain is Urease accessory protein UreG, found in Cereibacter sphaeroides (strain ATCC 17025 / ATH 2.4.3) (Rhodobacter sphaeroides).